Consider the following 287-residue polypeptide: NAD-dependent protein deacylase sir-2.2 (287 aa).

The 278-residue stretch at 10 to 287 (AELCENSLKK…YKISDVLKEM (278 aa)) folds into the Deacetylase sirtuin-type domain. NAD(+)-binding positions include 35 to 55 (GAGI…VGLY) and 116 to 119 (QNVD). Residue H134 is the Proton acceptor of the active site. C142, C145, C196, and C199 together coordinate Zn(2+). Residues 236–238 (GTS), 262–264 (NIG), and I280 contribute to the NAD(+) site.

It belongs to the sirtuin family. Class II subfamily. In terms of assembly, interacts with pyc-1, pcca-1 and mccc-1. Requires Zn(2+) as cofactor. As to expression, ubiquitously expressed with high expression in the pharynx, body wall muscles and gonad.

It localises to the mitochondrion matrix. The protein resides in the mitochondrion. It catalyses the reaction N(6)-acetyl-L-lysyl-[protein] + NAD(+) + H2O = 2''-O-acetyl-ADP-D-ribose + nicotinamide + L-lysyl-[protein]. Functionally, NAD-dependent protein deacylase. Catalyzes the NAD-dependent hydrolysis of acyl groups from lysine residues. Plays a role in oxidative stress resistance. This Caenorhabditis elegans protein is NAD-dependent protein deacylase sir-2.2 (sir-2.2).